Here is a 194-residue protein sequence, read N- to C-terminus: Molybdenum cofactor guanylyltransferase (194 aa).

GTP contacts are provided by residues 12 to 14, K25, N53, D71, and D101; that span reads LAG. D101 provides a ligand contact to Mg(2+).

This sequence belongs to the MobA family. In terms of assembly, monomer. Requires Mg(2+) as cofactor.

The protein localises to the cytoplasm. It carries out the reaction Mo-molybdopterin + GTP + H(+) = Mo-molybdopterin guanine dinucleotide + diphosphate. Its function is as follows. Transfers a GMP moiety from GTP to Mo-molybdopterin (Mo-MPT) cofactor (Moco or molybdenum cofactor) to form Mo-molybdopterin guanine dinucleotide (Mo-MGD) cofactor. This chain is Molybdenum cofactor guanylyltransferase, found in Escherichia coli O157:H7.